The chain runs to 893 residues: Protein FAM186B (893 aa).

Disordered regions lie at residues 177 to 207 (GWQG…TMNT), 327 to 376 (QAED…PSPM), 537 to 557 (LEKE…DVER), 574 to 611 (LSLV…QRPM), and 806 to 827 (KPKK…GPTY). 2 stretches are compositionally biased toward polar residues: residues 179–188 (QGRSPQTSPS) and 197–207 (QMLQDQHTMNT). The stretch at 303–331 (RYHDLLLMKQALEFQLKKAQNATGQAEDL) forms a coiled coil. Basic and acidic residues predominate over residues 342-353 (SERETLPRKETV).

The protein belongs to the FAM186 family.

The polypeptide is Protein FAM186B (FAM186B) (Homo sapiens (Human)).